The primary structure comprises 23 residues: NLLQFENMIRNVAGRSGIWWYSD.

It depends on Ca(2+) as a cofactor. Contains 7 disulfide bonds. As to expression, expressed by the venom gland.

Its subcellular location is the secreted. It carries out the reaction a 1,2-diacyl-sn-glycero-3-phosphocholine + H2O = a 1-acyl-sn-glycero-3-phosphocholine + a fatty acid + H(+). Exhibits moderate hydrolytic activities and prefers the anionic micelles (dPPC with deoxycholate) to the zwitterionic micelles (dPPC with Triton X-100). PLA2 catalyzes the calcium-dependent hydrolysis of the 2-acyl groups in 3-sn-phosphoglycerides. This chain is Acidic phospholipase A2 Ts-A2, found in Trimeresurus stejnegeri (Chinese green tree viper).